Here is a 396-residue protein sequence, read N- to C-terminus: Elongation factor Tu (396 aa).

Positions Lys-10–Val-205 constitute a tr-type G domain. Residues Gly-19–Thr-26 are G1. Gly-19–Thr-26 lines the GTP pocket. Position 26 (Thr-26) interacts with Mg(2+). Positions Gly-62–Asn-66 are G2. A G3 region spans residues Asp-83 to Gly-86. Residues Asp-83 to His-87 and Asn-138 to Asp-141 contribute to the GTP site. The interval Asn-138–Asp-141 is G4. Positions Ser-175–Leu-177 are G5.

Belongs to the TRAFAC class translation factor GTPase superfamily. Classic translation factor GTPase family. EF-Tu/EF-1A subfamily. As to quaternary structure, monomer.

Its subcellular location is the cytoplasm. It carries out the reaction GTP + H2O = GDP + phosphate + H(+). Functionally, GTP hydrolase that promotes the GTP-dependent binding of aminoacyl-tRNA to the A-site of ribosomes during protein biosynthesis. In Corynebacterium efficiens (strain DSM 44549 / YS-314 / AJ 12310 / JCM 11189 / NBRC 100395), this protein is Elongation factor Tu.